The primary structure comprises 302 residues: MCAERLGHFMTLALVLATIDPARGTDATNPPEGPQDRSSQQKGRLSLQNTAEIQHCLVNAGDVGCGVFECFENNSCEIRGLHGICMTFLHNAGKFDAQGKSFIKDALKCKAHALRHRFGCISRKCPAIREMVFQLQRECYLKHDLCAAAQENTRVIVEMIHFKDLLLHEPYVDLVNLLLTCGEEVKEAITHSVQVQCEQNWGSLCSILSFCTSAIQRPPTAPPERQPQVDRAKLSRAHHGEAGHHLPEPSSRETGRGAKGERGSKSHPNAHARGRVGGLGAQGPSGSSEWEDEQSEYSDIRR.

The signal sequence occupies residues 1-24 (MCAERLGHFMTLALVLATIDPARG). Positions 23–44 (RGTDATNPPEGPQDRSSQQKGR) are disordered. N-linked (GlcNAc...) asparagine glycosylation occurs at Asn-73. The disordered stretch occupies residues 218-302 (PPTAPPERQP…EQSEYSDIRR (85 aa)). The segment covering 227–264 (PQVDRAKLSRAHHGEAGHHLPEPSSRETGRGAKGERGS) has biased composition (basic and acidic residues). Ser-250 and Ser-251 each carry phosphoserine. The residue at position 254 (Thr-254) is a Phosphothreonine.

The protein belongs to the stanniocalcin family. Homodimer; disulfide-linked.

The protein resides in the secreted. In terms of biological role, has an anti-hypocalcemic action on calcium and phosphate homeostasis. This Macaca nemestrina (Pig-tailed macaque) protein is Stanniocalcin-2 (STC2).